Here is a 100-residue protein sequence, read N- to C-terminus: NADH-quinone oxidoreductase subunit K (100 aa).

The next 3 membrane-spanning stretches (helical) occupy residues 1 to 21 (MIGL…GLAG), 28 to 48 (ILLL…GFVA), and 64 to 84 (FIIA…ILWF).

This sequence belongs to the complex I subunit 4L family. As to quaternary structure, NDH-1 is composed of 14 different subunits. Subunits NuoA, H, J, K, L, M, N constitute the membrane sector of the complex.

The protein localises to the cell inner membrane. It catalyses the reaction a quinone + NADH + 5 H(+)(in) = a quinol + NAD(+) + 4 H(+)(out). In terms of biological role, NDH-1 shuttles electrons from NADH, via FMN and iron-sulfur (Fe-S) centers, to quinones in the respiratory chain. The immediate electron acceptor for the enzyme in this species is believed to be ubiquinone. Couples the redox reaction to proton translocation (for every two electrons transferred, four hydrogen ions are translocated across the cytoplasmic membrane), and thus conserves the redox energy in a proton gradient. The chain is NADH-quinone oxidoreductase subunit K from Helicobacter pylori (strain B38).